The primary structure comprises 162 residues: SsrA-binding protein (162 aa).

Positions 140–162 are disordered; the sequence is EDRRHDIKERETKREMDRAMRRR.

Belongs to the SmpB family.

It localises to the cytoplasm. Functionally, required for rescue of stalled ribosomes mediated by trans-translation. Binds to transfer-messenger RNA (tmRNA), required for stable association of tmRNA with ribosomes. tmRNA and SmpB together mimic tRNA shape, replacing the anticodon stem-loop with SmpB. tmRNA is encoded by the ssrA gene; the 2 termini fold to resemble tRNA(Ala) and it encodes a 'tag peptide', a short internal open reading frame. During trans-translation Ala-aminoacylated tmRNA acts like a tRNA, entering the A-site of stalled ribosomes, displacing the stalled mRNA. The ribosome then switches to translate the ORF on the tmRNA; the nascent peptide is terminated with the 'tag peptide' encoded by the tmRNA and targeted for degradation. The ribosome is freed to recommence translation, which seems to be the essential function of trans-translation. The polypeptide is SsrA-binding protein (Myxococcus xanthus (strain DK1622)).